Consider the following 172-residue polypeptide: Protein GrpE (172 aa).

Residues 1 to 11 (MSEENNSQNSN) are compositionally biased toward low complexity. Positions 1-22 (MSEENNSQNSNPPNPENGEIAS) are disordered.

The protein belongs to the GrpE family. In terms of assembly, homodimer.

It is found in the cytoplasm. Its function is as follows. Participates actively in the response to hyperosmotic and heat shock by preventing the aggregation of stress-denatured proteins, in association with DnaK and GrpE. It is the nucleotide exchange factor for DnaK and may function as a thermosensor. Unfolded proteins bind initially to DnaJ; upon interaction with the DnaJ-bound protein, DnaK hydrolyzes its bound ATP, resulting in the formation of a stable complex. GrpE releases ADP from DnaK; ATP binding to DnaK triggers the release of the substrate protein, thus completing the reaction cycle. Several rounds of ATP-dependent interactions between DnaJ, DnaK and GrpE are required for fully efficient folding. In Bdellovibrio bacteriovorus (strain ATCC 15356 / DSM 50701 / NCIMB 9529 / HD100), this protein is Protein GrpE.